Reading from the N-terminus, the 493-residue chain is Probable plastidic glucose transporter 2 (493 aa).

Over residues 1–14 (MLGLQRETSSMYKR) the composition is skewed to polar residues. The interval 1–24 (MLGLQRETSSMYKRTSSRDYSPMI) is disordered. A run of 12 helical transmembrane segments spans residues 52–72 (LPHV…LGVV), 94–114 (LVVS…GGVA), 128–148 (LPMI…VMLL), 151–171 (FLVG…VTEV), 182–202 (SFIQ…GIPV), 211–231 (VCFW…FLCA), 293–313 (VVFI…NAVF), 329–349 (LGNI…MVLM), 356–376 (LLLL…VGAT), 392–412 (GTLV…GLLL), 424–444 (AMAF…LLFL), and 450–470 (LGPR…VMFV).

It belongs to the major facilitator superfamily. Sugar transporter (TC 2.A.1.1) family.

The protein localises to the plastid. It is found in the chloroplast membrane. Functionally, may be involved in the efflux of glucose towards the cytosol. This Arabidopsis thaliana (Mouse-ear cress) protein is Probable plastidic glucose transporter 2.